Here is a 545-residue protein sequence, read N- to C-terminus: CTP synthase (545 aa).

The segment at 1-266 is amidoligase domain; sequence MTTNYIFVTG…DDYICKRFGL (266 aa). Position 14 (Ser14) interacts with CTP. A UTP-binding site is contributed by Ser14. ATP-binding positions include 15 to 20 and Asp72; that span reads SLGKGI. Residues Asp72 and Glu140 each contribute to the Mg(2+) site. CTP contacts are provided by residues 147-149, 187-192, and Lys223; these read DIE and KTKPTQ. UTP is bound by residues 187-192 and Lys223; that span reads KTKPTQ. Residue 239-241 participates in ATP binding; it reads KDV. The region spanning 291 to 542 is the Glutamine amidotransferase type-1 domain; sequence TIGMVGKYIA…VKAAGEYQKR (252 aa). Gly352 serves as a coordination point for L-glutamine. Cys379 (nucleophile; for glutamine hydrolysis) is an active-site residue. L-glutamine is bound by residues 380–383, Glu403, and Arg470; that span reads LGMQ. Residues His515 and Glu517 contribute to the active site.

It belongs to the CTP synthase family. As to quaternary structure, homotetramer.

It carries out the reaction UTP + L-glutamine + ATP + H2O = CTP + L-glutamate + ADP + phosphate + 2 H(+). The enzyme catalyses L-glutamine + H2O = L-glutamate + NH4(+). It catalyses the reaction UTP + NH4(+) + ATP = CTP + ADP + phosphate + 2 H(+). Its pathway is pyrimidine metabolism; CTP biosynthesis via de novo pathway; CTP from UDP: step 2/2. Allosterically activated by GTP, when glutamine is the substrate; GTP has no effect on the reaction when ammonia is the substrate. The allosteric effector GTP functions by stabilizing the protein conformation that binds the tetrahedral intermediate(s) formed during glutamine hydrolysis. Inhibited by the product CTP, via allosteric rather than competitive inhibition. Its function is as follows. Catalyzes the ATP-dependent amination of UTP to CTP with either L-glutamine or ammonia as the source of nitrogen. Regulates intracellular CTP levels through interactions with the four ribonucleotide triphosphates. In Sodalis glossinidius (strain morsitans), this protein is CTP synthase.